We begin with the raw amino-acid sequence, 141 residues long: Lutropin subunit beta (141 aa).

An N-terminal signal peptide occupies residues 1-18 (MGTLQGLLLWLLLGTGGA). Intrachain disulfides connect C29–C77, C43–C92, C46–C130, C54–C108, C58–C110, and C113–C120. The N-linked (GlcNAc...) asparagine glycan is linked to N33.

This sequence belongs to the glycoprotein hormones subunit beta family. As to quaternary structure, heterodimer of a common alpha chain and a unique beta chain which confers biological specificity to thyrotropin, lutropin, follitropin and gonadotropin.

The protein localises to the secreted. Functionally, promotes spermatogenesis and ovulation by stimulating the testes and ovaries to synthesize steroids. This Oryctolagus cuniculus (Rabbit) protein is Lutropin subunit beta (LHB).